Here is a 413-residue protein sequence, read N- to C-terminus: RNA-binding protein 41 (413 aa).

Positions 223–235 (SVGDSGTAESPSL) are enriched in polar residues. Positions 223–247 (SVGDSGTAESPSLLQDKGKQAAQGK) are disordered. Position 232 is a phosphoserine (Ser232). An RRM domain is found at 309 to 387 (KVLYLKNLSP…KILVIEFGKN (79 aa)).

Its function is as follows. May bind RNA. This chain is RNA-binding protein 41 (RBM41), found in Homo sapiens (Human).